Consider the following 702-residue polypeptide: Heparin-sulfate lyase (702 aa).

The first 17 residues, methionine 1–glycine 17, serve as a signal peptide directing secretion. Tyrosine 314 acts as the Proton acceptor in catalysis.

The protein belongs to the polysaccharide lyase 12 family.

It is found in the periplasm. It catalyses the reaction Elimination of sulfate, appears to act on linkages between N-acetyl-D-glucosamine and uronate. Product is an unsaturated sugar.. In terms of biological role, specifically cleaves heparan sulfate-rich regions of acidic polysaccharides. Does not act on N,O-desulfated glucosamine or N-acetyl-O-sulfated glucosamine linkages. Functions in cleaving metazoan heparan sulfate and providing carbon, nitrogen and sulfate sources for microorganisms. The polypeptide is Heparin-sulfate lyase (hepC) (Bacteroides thetaiotaomicron (strain ATCC 29148 / DSM 2079 / JCM 5827 / CCUG 10774 / NCTC 10582 / VPI-5482 / E50)).